The sequence spans 224 residues: UPF0319 protein VC_1853 (224 aa).

Positions 1–21 are cleaved as a signal peptide; that stretch reads MKLNPLILGLLLSFSAGHSLA.

Belongs to the UPF0319 family.

The protein is UPF0319 protein VC_1853 of Vibrio cholerae serotype O1 (strain ATCC 39315 / El Tor Inaba N16961).